A 148-amino-acid polypeptide reads, in one-letter code: UPF0179 protein UNCMA_27840 (148 aa).

Belongs to the UPF0179 family.

This chain is UPF0179 protein UNCMA_27840, found in Methanocella arvoryzae (strain DSM 22066 / NBRC 105507 / MRE50).